The primary structure comprises 61 residues: Large ribosomal subunit protein bL32 (61 aa).

Over residues 1–16 the composition is skewed to basic residues; sequence MAVPKRKTSPSKRGMR. The disordered stretch occupies residues 1-35; sequence MAVPKRKTSPSKRGMRRSADGLKSATYVEDKNSGE.

This sequence belongs to the bacterial ribosomal protein bL32 family.

This is Large ribosomal subunit protein bL32 from Agrobacterium fabrum (strain C58 / ATCC 33970) (Agrobacterium tumefaciens (strain C58)).